Reading from the N-terminus, the 198-residue chain is Angiopoietin-like protein 8 (198 aa).

A signal peptide spans 1-15 (MAVLALCLLWTLASA).

This sequence belongs to the ANGPTL8 family. As to quaternary structure, interacts with ANGPTL3. Proteolytically cleaved at the N-terminus. Expressed in liver and fat. Enriched in white and brown adipose tissues.

It localises to the secreted. Functionally, hormone that acts as a blood lipid regulator by regulating serum triglyceride levels. May be involved in the metabolic transition between fasting and refeeding: required to direct fatty acids to adipose tissue for storage in the fed state. According to a report, may act by promoting ANGPTL3 cleavage. According to another study, not required for cleavage of ANGPTL3. This chain is Angiopoietin-like protein 8, found in Mus musculus (Mouse).